We begin with the raw amino-acid sequence, 58 residues long: Metallothionein-2B (58 aa).

The tract at residues 1–29 (MPDPCCNDKCECKEGECKTGCKCKSCRCP) is beta. Residues cysteine 5, cysteine 6, cysteine 10, cysteine 12, cysteine 17, cysteine 21, cysteine 23, cysteine 26, cysteine 28, cysteine 31, cysteine 34, cysteine 38, cysteine 40, cysteine 46, cysteine 50, cysteine 54, cysteine 56, and cysteine 57 each contribute to the a divalent metal cation site. The tract at residues 30–58 (PCDKCSSECKCTSKEECSKTCSKPCSCCP) is alpha.

Belongs to the metallothionein superfamily. Type 3 family.

In terms of biological role, binds six divalent metal ions. Known to bind copper and cadmium. This Callinectes sapidus (Blue crab) protein is Metallothionein-2B.